The primary structure comprises 181 residues: Adenylate kinase (181 aa).

10 to 15 (GAGKGT) provides a ligand contact to ATP. Positions 30–59 (STGELFRRNIEKDTKLGHEAKKYLDAGDLV) are NMP. AMP is bound by residues T31, R36, 57-59 (DLV), 85-88 (GYPR), and Q92. The interval 126-132 (GRGRADD) is LID. ATP is bound at residue R127. AMP is bound by residues R129 and R140. ATP is bound at residue G166.

Belongs to the adenylate kinase family. As to quaternary structure, monomer.

It localises to the cytoplasm. The catalysed reaction is AMP + ATP = 2 ADP. It functions in the pathway purine metabolism; AMP biosynthesis via salvage pathway; AMP from ADP: step 1/1. In terms of biological role, catalyzes the reversible transfer of the terminal phosphate group between ATP and AMP. Plays an important role in cellular energy homeostasis and in adenine nucleotide metabolism. This chain is Adenylate kinase, found in Mycobacterium leprae (strain Br4923).